Reading from the N-terminus, the 400-residue chain is MAP kinase-activated protein kinase 2 (400 aa).

The segment at 1 to 43 is disordered; it reads MLSNSQGQSPPVPFPAPAPPPQPPTPALPHPPAQPPPPPPQQF. At serine 9 the chain carries Phosphoserine. Over residues 10 to 42 the composition is skewed to pro residues; it reads PPVPFPAPAPPPQPPTPALPHPPAQPPPPPPQQ. The residue at position 25 (threonine 25) is a Phosphothreonine. The region spanning 64-325 is the Protein kinase domain; it reads KVTSQVLGLG…ITEFMNHPWI (262 aa). ATP-binding positions include 70 to 78 and lysine 93; that span reads LGLGINGKV. 139–141 lines the staurosporine pocket; it reads ECL. The active-site Proton acceptor is the aspartate 186. A Phosphothreonine; by MAPK14 modification is found at threonine 222. Residue serine 272 is modified to Phosphoserine; by MAPK14. Serine 328 is modified (phosphoserine; by autocatalysis). The autoinhibitory helix stretch occupies residues 328 to 364; it reads STKVPQTPLHTSRVLKEDKERWEDVKEEMTSALATMR. The residue at position 334 (threonine 334) is a Phosphothreonine; by MAPK14. Lysine 353 participates in a covalent cross-link: Glycyl lysine isopeptide (Lys-Gly) (interchain with G-Cter in SUMO). The Nuclear export signal (NES) signature appears at 356–365; it reads MTSALATMRV. Residues 366-390 form a p38 MAPK-binding site region; the sequence is DYEQIKIKKIEDASNPLLLKRRKKA. 2 consecutive short sequence motifs (bipartite nuclear localization signal) follow at residues 371-374 and 385-389; these read KIKK and KRRKK.

It belongs to the protein kinase superfamily. CAMK Ser/Thr protein kinase family. Heterodimer with p38-alpha/MAPK14; this heterodimer forms a stable complex: molecules are positioned 'face to face' so that the ATP-binding sites of both kinases are at the heterodimer interface. Interacts with PHC2. Interacts with HSF1. Sumoylation inhibits the protein kinase activity. In terms of processing, phosphorylated and activated by MAP kinase p38-alpha/MAPK14 at Thr-222, Ser-272 and Thr-334. Expressed in all tissues examined.

The protein resides in the cytoplasm. Its subcellular location is the nucleus. It carries out the reaction L-seryl-[protein] + ATP = O-phospho-L-seryl-[protein] + ADP + H(+). It catalyses the reaction L-threonyl-[protein] + ATP = O-phospho-L-threonyl-[protein] + ADP + H(+). With respect to regulation, activated following phosphorylation by p38-alpha/MAPK14 following various stresses. Inhibited following sumoylation. Specifically inhibited by pyrrolopyridine inhibitors. Its function is as follows. Stress-activated serine/threonine-protein kinase involved in cytokine production, endocytosis, reorganization of the cytoskeleton, cell migration, cell cycle control, chromatin remodeling, DNA damage response and transcriptional regulation. Following stress, it is phosphorylated and activated by MAP kinase p38-alpha/MAPK14, leading to phosphorylation of substrates. Phosphorylates serine in the peptide sequence, Hyd-X-R-X(2)-S, where Hyd is a large hydrophobic residue. Phosphorylates ALOX5, CDC25B, CDC25C, CEP131, ELAVL1, HNRNPA0, HSP27/HSPB1, KRT18, KRT20, LIMK1, LSP1, PABPC1, PARN, PDE4A, RCSD1, RPS6KA3, TAB3 and TTP/ZFP36. Phosphorylates HSF1; leading to the interaction with HSP90 proteins and inhibiting HSF1 homotrimerization, DNA-binding and transactivation activities. Mediates phosphorylation of HSP27/HSPB1 in response to stress, leading to the dissociation of HSP27/HSPB1 from large small heat-shock protein (sHsps) oligomers and impairment of their chaperone activities and ability to protect against oxidative stress effectively. Involved in inflammatory response by regulating tumor necrosis factor (TNF) and IL6 production post-transcriptionally: acts by phosphorylating AU-rich elements (AREs)-binding proteins ELAVL1, HNRNPA0, PABPC1 and TTP/ZFP36, leading to the regulation of the stability and translation of TNF and IL6 mRNAs. Phosphorylation of TTP/ZFP36, a major post-transcriptional regulator of TNF, promotes its binding to 14-3-3 proteins and reduces its ARE mRNA affinity, leading to inhibition of dependent degradation of ARE-containing transcripts. Phosphorylates CEP131 in response to cellular stress induced by ultraviolet irradiation which promotes binding of CEP131 to 14-3-3 proteins and inhibits formation of novel centriolar satellites. Also involved in late G2/M checkpoint following DNA damage through a process of post-transcriptional mRNA stabilization: following DNA damage, relocalizes from nucleus to cytoplasm and phosphorylates HNRNPA0 and PARN, leading to stabilization of GADD45A mRNA. Involved in toll-like receptor signaling pathway (TLR) in dendritic cells: required for acute TLR-induced macropinocytosis by phosphorylating and activating RPS6KA3. In Homo sapiens (Human), this protein is MAP kinase-activated protein kinase 2 (MAPKAPK2).